Consider the following 152-residue polypeptide: MKKEKDDNLIAQNKKARHDYFIKETVEAGIALTGTEIKSVRARRINLRDGYVQIYGGSAYLENVHISEYKQGNRYNHDPLRSRRLLLHKKEIARLAKAQSERGIAIIPLKVYLKHGFAKVLIGVGQGKKEYDKRQTIKERDQKREIRRKYGI.

It belongs to the SmpB family.

The protein localises to the cytoplasm. In terms of biological role, required for rescue of stalled ribosomes mediated by trans-translation. Binds to transfer-messenger RNA (tmRNA), required for stable association of tmRNA with ribosomes. tmRNA and SmpB together mimic tRNA shape, replacing the anticodon stem-loop with SmpB. tmRNA is encoded by the ssrA gene; the 2 termini fold to resemble tRNA(Ala) and it encodes a 'tag peptide', a short internal open reading frame. During trans-translation Ala-aminoacylated tmRNA acts like a tRNA, entering the A-site of stalled ribosomes, displacing the stalled mRNA. The ribosome then switches to translate the ORF on the tmRNA; the nascent peptide is terminated with the 'tag peptide' encoded by the tmRNA and targeted for degradation. The ribosome is freed to recommence translation, which seems to be the essential function of trans-translation. The polypeptide is SsrA-binding protein (Lactobacillus helveticus (strain DPC 4571)).